A 70-amino-acid polypeptide reads, in one-letter code: Cytoinsectotoxin-2c (70 aa).

The protein belongs to the cationic peptide 06 (cytoinsectotoxin) family. As to expression, expressed by the venom gland.

Its subcellular location is the secreted. Its function is as follows. Insecticidal and antimicrobial peptide. Has insecticidal activity against larvae of flesh fly S.carnaria. Has antibacterial activity against Gram-positive bacterium B.subtilis B-501 (MIC=1.25 uM) and Gram-negative bacterium E.coli DH5alpha (MIC=2.5 uM). This is Cytoinsectotoxin-2c from Lachesana tarabaevi (Spider).